Consider the following 142-residue polypeptide: Nucleoside diphosphate kinase (142 aa).

Positions 9, 57, 85, 91, 102, and 112 each coordinate ATP. The active-site Pros-phosphohistidine intermediate is the His-115.

Belongs to the NDK family. Homotetramer. It depends on Mg(2+) as a cofactor.

It localises to the cytoplasm. The catalysed reaction is a 2'-deoxyribonucleoside 5'-diphosphate + ATP = a 2'-deoxyribonucleoside 5'-triphosphate + ADP. It catalyses the reaction a ribonucleoside 5'-diphosphate + ATP = a ribonucleoside 5'-triphosphate + ADP. In terms of biological role, major role in the synthesis of nucleoside triphosphates other than ATP. The ATP gamma phosphate is transferred to the NDP beta phosphate via a ping-pong mechanism, using a phosphorylated active-site intermediate. This chain is Nucleoside diphosphate kinase, found in Dehalococcoides mccartyi (strain ATCC BAA-2100 / JCM 16839 / KCTC 5957 / BAV1).